The chain runs to 331 residues: Ketol-acid reductoisomerase (NADP(+)) (331 aa).

The KARI N-terminal Rossmann domain maps to 2-182 (ARMYYDTDAN…GGTRAGILET (181 aa)). Residues 25–28 (YGSQ), S51, S53, and 83–86 (DEVQ) contribute to the NADP(+) site. H108 is an active-site residue. G134 is an NADP(+) binding site. Positions 183–328 (TFREETETDL…KDLRAMFSWL (146 aa)) constitute a KARI C-terminal knotted domain. Mg(2+) is bound by residues D191, E195, E227, and E231. Substrate is bound at residue S252.

It belongs to the ketol-acid reductoisomerase family. It depends on Mg(2+) as a cofactor.

The enzyme catalyses (2R)-2,3-dihydroxy-3-methylbutanoate + NADP(+) = (2S)-2-acetolactate + NADPH + H(+). It catalyses the reaction (2R,3R)-2,3-dihydroxy-3-methylpentanoate + NADP(+) = (S)-2-ethyl-2-hydroxy-3-oxobutanoate + NADPH + H(+). The protein operates within amino-acid biosynthesis; L-isoleucine biosynthesis; L-isoleucine from 2-oxobutanoate: step 2/4. It participates in amino-acid biosynthesis; L-valine biosynthesis; L-valine from pyruvate: step 2/4. Its function is as follows. Involved in the biosynthesis of branched-chain amino acids (BCAA). Catalyzes an alkyl-migration followed by a ketol-acid reduction of (S)-2-acetolactate (S2AL) to yield (R)-2,3-dihydroxy-isovalerate. In the isomerase reaction, S2AL is rearranged via a Mg-dependent methyl migration to produce 3-hydroxy-3-methyl-2-ketobutyrate (HMKB). In the reductase reaction, this 2-ketoacid undergoes a metal-dependent reduction by NADPH to yield (R)-2,3-dihydroxy-isovalerate. The polypeptide is Ketol-acid reductoisomerase (NADP(+)) (Rippkaea orientalis (strain PCC 8801 / RF-1) (Cyanothece sp. (strain PCC 8801))).